A 371-amino-acid chain; its full sequence is Queuine tRNA-ribosyltransferase (371 aa).

Residue Asp-89 is the Proton acceptor of the active site. Substrate is bound by residues Asp-89 to Phe-93, Asp-143, Gln-185, and Gly-212. The RNA binding stretch occupies residues Gly-243–Asp-249. Asp-262 (nucleophile) is an active-site residue. An RNA binding; important for wobble base 34 recognition region spans residues Thr-267–Arg-271. Zn(2+)-binding residues include Cys-300, Cys-302, Cys-305, and His-331.

Belongs to the queuine tRNA-ribosyltransferase family. As to quaternary structure, homodimer. Within each dimer, one monomer is responsible for RNA recognition and catalysis, while the other monomer binds to the replacement base PreQ1. Zn(2+) serves as cofactor.

It carries out the reaction 7-aminomethyl-7-carbaguanine + guanosine(34) in tRNA = 7-aminomethyl-7-carbaguanosine(34) in tRNA + guanine. Its pathway is tRNA modification; tRNA-queuosine biosynthesis. Catalyzes the base-exchange of a guanine (G) residue with the queuine precursor 7-aminomethyl-7-deazaguanine (PreQ1) at position 34 (anticodon wobble position) in tRNAs with GU(N) anticodons (tRNA-Asp, -Asn, -His and -Tyr). Catalysis occurs through a double-displacement mechanism. The nucleophile active site attacks the C1' of nucleotide 34 to detach the guanine base from the RNA, forming a covalent enzyme-RNA intermediate. The proton acceptor active site deprotonates the incoming PreQ1, allowing a nucleophilic attack on the C1' of the ribose to form the product. After dissociation, two additional enzymatic reactions on the tRNA convert PreQ1 to queuine (Q), resulting in the hypermodified nucleoside queuosine (7-(((4,5-cis-dihydroxy-2-cyclopenten-1-yl)amino)methyl)-7-deazaguanosine). The sequence is that of Queuine tRNA-ribosyltransferase from Pseudomonas putida (strain ATCC 47054 / DSM 6125 / CFBP 8728 / NCIMB 11950 / KT2440).